Here is a 382-residue protein sequence, read N- to C-terminus: V-type proton ATPase subunit C 1 (382 aa).

Thr-2 is subject to N-acetylthreonine.

Belongs to the V-ATPase C subunit family. V-ATPase is a heteromultimeric enzyme made up of two complexes: the ATP-hydrolytic V1 complex and the proton translocation V0 complex. The V1 complex consists of three catalytic AB heterodimers that form a heterohexamer, three peripheral stalks each consisting of EG heterodimers, one central rotor including subunits D and F, and the regulatory subunits C and H. The proton translocation complex V0 consists of the proton transport subunit a, a ring of proteolipid subunits c9c'', rotary subunit d, subunits e and f, and the accessory subunits ATP6AP1/Ac45 and ATP6AP2/PRR. As to expression, ubiquitous. Abundant in brain, liver, kidney and testis.

Its subcellular location is the cytoplasmic vesicle. It localises to the secretory vesicle. The protein resides in the synaptic vesicle membrane. The protein localises to the clathrin-coated vesicle membrane. Functionally, subunit of the V1 complex of vacuolar(H+)-ATPase (V-ATPase), a multisubunit enzyme composed of a peripheral complex (V1) that hydrolyzes ATP and a membrane integral complex (V0) that translocates protons. V-ATPase is responsible for acidifying and maintaining the pH of intracellular compartments and in some cell types, is targeted to the plasma membrane, where it is responsible for acidifying the extracellular environment. Subunit C is necessary for the assembly of the catalytic sector of the enzyme and is likely to have a specific function in its catalytic activity. The sequence is that of V-type proton ATPase subunit C 1 (Atp6v1c1) from Mus musculus (Mouse).